A 91-amino-acid polypeptide reads, in one-letter code: DNA-directed RNA polymerase subunit Rpo11 (91 aa).

This sequence belongs to the archaeal Rpo11/eukaryotic RPB11/RPC19 RNA polymerase subunit family. In terms of assembly, part of the RNA polymerase complex.

The protein resides in the cytoplasm. The catalysed reaction is RNA(n) + a ribonucleoside 5'-triphosphate = RNA(n+1) + diphosphate. Functionally, DNA-dependent RNA polymerase (RNAP) catalyzes the transcription of DNA into RNA using the four ribonucleoside triphosphates as substrates. This Methanococcoides burtonii (strain DSM 6242 / NBRC 107633 / OCM 468 / ACE-M) protein is DNA-directed RNA polymerase subunit Rpo11.